The sequence spans 423 residues: Protein phosphatase 2C 77 (423 aa).

The segment at 74-95 (GDEINGSDEFDPRSMNQSEKKV) is disordered. In terms of domain architecture, PPM-type phosphatase spans 112–411 (LYGVTSICGR…DNISVVVVDL (300 aa)). Mg(2+) is bound by residues aspartate 165, aspartate 251, and serine 252. A disulfide bridge connects residues cysteine 257 and cysteine 331. Residues aspartate 337 and aspartate 402 each contribute to the Mg(2+) site.

This sequence belongs to the PP2C family. As to quaternary structure, interacts with SPK1, CIPK15/PKS3, GPX3, SCAR1, SCAR2, SCAR3 and SCARL. Also interacts with CIPK24/SOS2. Binds to the fibrillin precursor protein. Interacts with ABA-bounded PYR1, PYL1, PYL2, PYL3, PYL4, PYL5, PYL6, PYL8 and PYL9, and with free PYL2, PYL3 and PYL4. Interacts with and represses GHR1, and, to a lesser extent, SRK2E/OST1. It depends on Mg(2+) as a cofactor. Requires Mn(2+) as cofactor.

It carries out the reaction O-phospho-L-seryl-[protein] + H2O = L-seryl-[protein] + phosphate. The enzyme catalyses O-phospho-L-threonyl-[protein] + H2O = L-threonyl-[protein] + phosphate. Phosphatase activity repressed by oxidized ATGPX3, free fatty acids (e.g. arachidonic acid (20:4) and Linolenic acid (18:3)) and by H(2)O(2). Repressed by PYR/PYL/RCAR ABA receptors in an ABA-dependent manner. Its function is as follows. Repressor of the abscisic acid (ABA) signaling pathway that regulates numerous ABA responses, such as stomatal closure, osmotic water permeability of the plasma membrane (Pos), high light stress, response to glucose, seed germination and inhibition of vegetative growth. During the stomatal closure regulation, modulates the inward calcium-channel permeability as well as H(2)O(2) and oxidative burst in response to ABA and dehydration. Represses GHR1 and, to some extent, SRK2E/OST1, kinases involved in the regulation of SLAC1-dependent stomatal closure. Controls negatively fibrillin that is involved in mediating ABA-induced photoprotection. May be implicated in ABA content regulation. Involved in acquired thermotolerance of root growth and seedling survival. Required for the Erwinia amylovora harpin-induced (HrpN) drought tolerance. Involved in the hydrotropic response. The protein is Protein phosphatase 2C 77 of Arabidopsis thaliana (Mouse-ear cress).